The chain runs to 3010 residues: Genome polyprotein (3010 aa).

Ser2 is modified (N-acetylserine; by host). Positions 2–23 are interaction with STAT1; sequence STNPKPQRKTKRNTNRRPQDVK. The interval 2 to 58 is interaction with EIF2AK2/PKR; that stretch reads STNPKPQRKTKRNTNRRPQDVKFPGGGQIVGGVYLLPRRGPRLGVRATRKTSERSQP. The segment at 2-59 is interaction with DDX3X; the sequence is STNPKPQRKTKRNTNRRPQDVKFPGGGQIVGGVYLLPRRGPRLGVRATRKTSERSQPR. Positions 2 to 75 are disordered; the sequence is STNPKPQRKT…PKARQPEGRA (74 aa). Residues 2–168 lie on the Cytoplasmic side of the membrane; that stretch reads STNPKPQRKT…EDGVNYATGN (167 aa). 2 consecutive short sequence motifs (nuclear localization signal) follow at residues 5-13 and 38-43; these read PKPQRKTKR and PRRGPR. A compositionally biased stretch (basic residues) spans 7 to 16; sequence PQRKTKRNTN. The span at 32-47 shows a compositional bias: low complexity; the sequence is GGVYLLPRRGPRLGVR. Ser53 is modified (phosphoserine; by host). 2 short sequence motifs (nuclear localization signal) span residues 58-64 and 66-71; these read PRGRRQP and PKARQP. The residue at position 99 (Ser99) is a Phosphoserine; by host. The important for endoplasmic reticulum and mitochondrial localization stretch occupies residues 112 to 152; the sequence is PRRRSRNLGKVIDTLTCGFADLMGYIPLVGAPLGGVARALA. Ser116 bears the Phosphoserine; by host PKA mark. Residues 122 to 173 form an interaction with APOA2 region; that stretch reads VIDTLTCGFADLMGYIPLVGAPLGGVARALAHGVRVVEDGVNYATGNLPGCS. Residues 164–167 form an important for lipid droplets localization region; sequence YATG. Residues 169–189 form a helical membrane-spanning segment; that stretch reads LPGCSFSIFLLALLSCLTIPA. Positions 178–191 are cleaved as a propeptide — ER anchor for the core protein, removed in mature form by host signal peptidase; that stretch reads LLALLSCLTIPASA. Residues 190 to 358 are Lumenal-facing; it reads SAYEVRNVSG…AGAHWGVLAG (169 aa). 4 N-linked (GlcNAc...) asparagine; by host glycosylation sites follow: Asn196, Asn209, Asn234, and Asn250. Positions 265 to 296 are important for fusion; the sequence is LVGAAAFCSAMYVGDLCGSVFLVSQLFTFSPR. The N-linked (GlcNAc...) asparagine; by host glycan is linked to Asn305. The helical transmembrane segment at 359–379 threads the bilayer; it reads LAYYSMVGNWAKVLIVMLLFA. At 380-725 the chain is on the lumenal side; that stretch reads GVDGETRVTG…WDYIVILFLL (346 aa). Residues 385–411 form an HVR1 region; the sequence is TRVTGGQIARNAYSLTTLFSSGSAQNI. Residues Asn417, Asn423, Asn430, and Asn448 are each glycosylated (N-linked (GlcNAc...) (high mannose) asparagine; by host). 4 cysteine pairs are disulfide-bonded: Cys429–Cys552, Cys452–Cys459, Cys486–Cys494, and Cys503–Cys508. Positions 474–479 are HVR2; that stretch reads YAEQGG. Positions 480–493 are CD81-binding 1; it reads QDQRPYCWHYAPKP. The N-linked (GlcNAc...) (high mannose) asparagine; by host glycan is linked to Asn532. Residue Asn540 is glycosylated (N-linked (GlcNAc...) asparagine; by host). The tract at residues 544 to 551 is CD81-binding 2; that stretch reads PPQGNWFG. The N-linked (GlcNAc...) (high mannose) asparagine; by host glycan is linked to Asn556. A disulfide bond links Cys564 and Cys569. N-linked (GlcNAc...) (high mannose) asparagine; by host glycosylation occurs at Asn576. 3 cysteine pairs are disulfide-bonded: Cys581–Cys585, Cys597–Cys620, and Cys607–Cys644. Residues Asn623 and Asn645 are each glycosylated (N-linked (GlcNAc...) (high mannose) asparagine; by host). Cys652 and Cys677 are oxidised to a cystine. Residues 660-671 are PKR/eIF2-alpha phosphorylation homology domain (PePHD); sequence LELSPLLLSTTE. Residues 726 to 746 traverse the membrane as a helical segment; the sequence is LADARVCACLWMMLLIAQAEA. Topologically, residues 747–757 are lumenal; that stretch reads ALENLVVLNAA. Residues 758 to 778 traverse the membrane as a helical segment; it reads SVAGAHGILSFLVFFCAAWYI. Residues 779-781 are Cytoplasmic-facing; sequence KGK. The helical transmembrane segment at 782–803 threads the bilayer; sequence LVPGAAYAFYGVWPLLLLLLAL. Residues 804-813 are Lumenal-facing; it reads PPRAYAMERE. The chain crosses the membrane as a helical span at residues 814 to 834; sequence MAASCGGAVFVGLVLLTLSPY. Over 835 to 838 the chain is Cytoplasmic; the sequence is YKEF. The helical transmembrane segment at 839–859 threads the bilayer; it reads LARLIWWLQYFITRAEAHLQV. At 860–881 the chain is on the lumenal side; sequence WIPPLNIRGGRDAIILLACVVH. A helical membrane pass occupies residues 882-902; it reads PELIFDITKLLLAILGPLMVL. Positions 903 to 1026 constitute a Peptidase C18 domain; that stretch reads QASITQVPYF…SLEGQGWRLL (124 aa). Residues 903 to 1657 are Cytoplasmic-facing; that stretch reads QASITQVPYF…CMSADLEVVT (755 aa). The segment at 904–1206 is protease NS2-3; it reads ASITQVPYFV…PVESMETTMR (303 aa). Cys922 is lipidated: S-palmitoyl cysteine; by host. The interval 929–949 is interaction with host SCPS1; sequence AGGHYVQMAFVKLTALTGTYV. Residues His952, Glu972, and Cys993 each act as for protease NS2 activity; shared with dimeric partner in the active site. The region spanning 1027–1208 is the Peptidase S29 domain; sequence APITAYSQQT…ESMETTMRSP (182 aa). Active-site charge relay system; for serine protease NS3 activity residues include His1083 and Asp1107. The Zn(2+) site is built by Cys1123 and Cys1125. Residue Ser1165 is the Charge relay system; for serine protease NS3 activity of the active site. 2 residues coordinate Zn(2+): Cys1171 and His1175. Positions 1217–1369 constitute a Helicase ATP-binding domain; it reads PAVPQTFQVA…PNIEEVALSN (153 aa). Residue 1230 to 1237 coordinates ATP; the sequence is APTGSGKS. Mg(2+) is bound by residues Ser1237 and Glu1317. A DECH box motif is present at residues 1316-1319; sequence DECH. The segment at 1486–1497 is RNA-binding; that stretch reads QRRGRTGRGRRG. Residues 1658–1678 form a helical membrane-spanning segment; it reads STWVLVGGVLAALAAYCLTTG. The interval 1679-1690 is NS3-binding; that stretch reads SVVIVGRIILSG. The Cytoplasmic segment spans residues 1679–1805; that stretch reads SVVIVGRIIL…SITSPLSTQN (127 aa). The helical transmembrane segment at 1806-1824 threads the bilayer; sequence TLLFNIWGGWVAAQLAPPS. At 1825-1828 the chain is on the lumenal side; the sequence is AASA. The chain crosses the membrane as a helical span at residues 1829 to 1849; sequence FVGAGIAGAAVGSIGLGKVLV. Residue Asp1850 is a topological domain, cytoplasmic. The chain crosses the membrane as a helical span at residues 1851-1871; that stretch reads ILAGYGAGVAGALVAFKIMSG. The Lumenal segment spans residues 1872 to 1881; that stretch reads EVPSTEDLVN. The chain crosses the membrane as a helical span at residues 1882-1902; that stretch reads LLPAILSPGALVVGVVCAAIL. The Cytoplasmic portion of the chain corresponds to 1903 to 1972; sequence RRHVGPGEGA…WINEDCSTPC (70 aa). Residues Cys1968 and Cys1972 are each lipidated (S-palmitoyl cysteine; by host). Residues 1973–2002 lie within the membrane without spanning it; that stretch reads SGSWLRDVWDWICTVLTDFKTWLQSKLLPR. Topologically, residues 2003–2989 are cytoplasmic; it reads LPGVPFFSCQ…YHSLSRARPR (987 aa). Positions 2011, 2029, 2031, and 2052 each coordinate Zn(2+). The segment at 2120–2208 is FKBP8-binding; that stretch reads EFFTEVDGVR…ASSSASQLSA (89 aa). Residues 2120 to 2332 are transcriptional activation; the sequence is EFFTEVDGVR…PIPPPRRKRT (213 aa). The interaction with non-structural protein 4A stretch occupies residues 2135–2139; it reads PACKP. The interval 2189–2441 is interaction with host SKP2; sequence RLARGSPPSL…PCAAEESKLP (253 aa). Ser2194 is subject to Phosphoserine; by host; in p56. Ser2197, Ser2201, Ser2204, Ser2207, and Ser2210 each carry phosphoserine; by host; in p58. Residues 2210-2249 are ISDR; it reads SLKATCTTHHDSPDVDLIEANLLWRQEMGGNITRVESENK. The tract at residues 2210–2275 is interaction with EIF2AK2/PKR; that stretch reads SLKATCTTHH…REPSVAAEIL (66 aa). Residues 2249-2306 are NS4B-binding; that stretch reads KVVILDSFDPLRAEEDEREPSVAAEILRKTKRFPPAMPIWARPDYNPPLLESWKDPDY. Positions 2322–2325 match the SH3-binding motif; it reads PPIP. Residues 2326-2334 carry the Nuclear localization signal motif; sequence PPRRKRTVV. Lys2350 participates in a covalent cross-link: Glycyl lysine isopeptide (Lys-Gly) (interchain with G-Cter in ubiquitin). Positions 2351 to 2365 are enriched in polar residues; the sequence is TFGSSGSSAVDSGTA. The segment at 2351 to 2407 is disordered; it reads TFGSSGSSAVDSGTATAPPDQASDDGDQGSDVESYSSMPPLEGEPGDPDLSDGSWST. The interval 2354–2377 is V3; sequence SSGSSAVDSGTATAPPDQASDDGD. Residues Ser2448 and Ser2461 each carry the phosphoserine; by host modification. Residues 2633–2751 form the RdRp catalytic domain; sequence PMGFSYDTRC…ICESAGTQED (119 aa). Mg(2+) is bound by residues Asp2639, Asp2737, and Asp2738. A helical transmembrane segment spans residues 2990 to 3010; it reads WFMLCLLLLSVGVGIYLLPNR.

The protein belongs to the hepacivirus polyprotein family. In terms of assembly, homooligomer. Interacts with E1 (via C-terminus). Interacts with the non-structural protein 5A. Interacts (via N-terminus) with host STAT1 (via SH2 domain); this interaction results in decreased STAT1 phosphorylation and ubiquitin-mediated proteasome-dependent STAT1 degradation, leading to decreased IFN-stimulated gene transcription. Interacts with host STAT3; this interaction constitutively activates STAT3. Interacts with host LTBR receptor. Interacts with host TNFRSF1A receptor and possibly induces apoptosis. Interacts with host HNRPK. Interacts with host YWHAE. Interacts with host UBE3A/E6AP. Interacts with host DDX3X. Interacts with host APOA2. Interacts with host RXRA protein. Interacts with host SP110 isoform 3/Sp110b; this interaction sequesters the transcriptional corepressor SP110 away from the nucleus. Interacts with host CREB3 nuclear transcription protein; this interaction triggers cell transformation. Interacts with host ACY3. Interacts with host C1QR1. Interacts with host RBM24; this interaction, which enhances the interaction of the mature core protein with 5'-UTR, may inhibit viral translation and favor replication. Interacts with host EIF2AK2/PKR; this interaction induces the autophosphorylation of EIF2AK2. Part of the viral assembly initiation complex composed of NS2, E1, E2, NS3, NS4A, NS5A and the mature core protein. As to quaternary structure, forms a heterodimer with envelope glycoprotein E2. Interacts with mature core protein. Interacts with protease NS2. The heterodimer E1/E2 interacts with host CLDN1; this interaction plays a role in viral entry into host cell. Interacts with host SPSB2 (via C-terminus). Part of the viral assembly initiation complex composed of NS2, E1, E2, NS3, NS4A, NS5A and the mature core protein. Interacts with host NEURL3; this interaction prevents E1 binding to glycoprotein E2. Forms a heterodimer with envelope glycoprotein E1. Interacts with host CD81 and SCARB1 receptors; these interactions play a role in viral entry into host cell. Interacts with host EIF2AK2/PKR; this interaction inhibits EIF2AK2 and probably allows the virus to evade the innate immune response. Interacts with host CD209/DC-SIGN and CLEC4M/DC-SIGNR. Interact with host SPCS1; this interaction is essential for viral particle assembly. Interacts with protease NS2. The heterodimer E1/E2 interacts with host CLDN1; this interaction plays a role in viral entry into host cell. Part of the viral assembly initiation complex composed of NS2, E1, E2, NS3, NS4A, NS5A and the mature core protein. Interacts with host SLC3A2/4F2hc; the interaction may facilitate viral entry into host cell. Interacts with human PLSCR1. In terms of assembly, homohexamer. Homoheptamer. Interacts with protease NS2. As to quaternary structure, homodimer. Interacts with host SPCS1; this interaction is essential for viral particle assembly. Interacts with envelope glycoprotein E1. Interacts with envelope glycoprotein E2. Interacts with viroporin p7. Interacts with serine protease/helicase NS3. Part of the replication complex composed of NS2, NS3, NS4A, NS4B, NS5A and the RNA-directed RNA polymerase embedded in an ER-derived membranous web. Part of the viral assembly initiation complex composed of NS2, E1, E2, NS3, NS4A, NS5A and the mature core protein. Interacts with protease NS2. Interacts with non-structural protein 4A; this interaction stabilizes the folding of NS3 serine protease. NS3-NS4A interaction is essential for NS3 activation and allows membrane anchorage of the latter. NS3/NS4A complex also prevents phosphorylation of host IRF3, thus preventing the establishment of dsRNA induced antiviral state. Interacts with host MAVS; this interaction leads to the cleavage and inhibition of host MAVS. Interacts with host TICAM1; this interaction leads to the cleavage and inhibition of host TICAM1. Interacts with host TANK-binding kinase/TBK1; this interaction results in the inhibition of the association between TBK1 and IRF3, which leads to the inhibition of IRF3 activation. Interacts with host RBM24. Part of the replication complex composed of NS2, NS3, NS4A, NS4B, NS5A and the RNA-directed RNA polymerase embedded in an ER-derived membranous web. Part of the viral assembly initiation complex composed of NS2, E1, E2, NS3, NS4A, NS5A and the mature core protein. In terms of assembly, interacts with NS3 serine protease; this interaction stabilizes the folding of NS3 serine protease. NS3-NS4A interaction is essential for NS3 activation and allows membrane anchorage of the latter. Interacts with non-structural protein 5A (via N-terminus). Part of the replication complex composed of NS2, NS3, NS4A, NS4B, NS5A and the RNA-directed RNA polymerase embedded in an ER-derived membranous web. Part of the viral assembly initiation complex composed of NS2, E1, E2, NS3, NS4A, NS5A and the mature core protein. As to quaternary structure, homomultimer. Interacts with non-structural protein NS5A. Interacts with host PLA2G4C; this interaction likely initiates the recruitment of replication complexes to lipid droplets. Interacts with host STING; this interaction disrupts the interaction between STING and TBK1 thereby suppressing the interferon signaling. Part of the replication complex composed of NS2, NS3, NS4A, NS4B, NS5A and the RNA-directed RNA polymerase embedded in an ER-derived membranous web. Monomer. Homodimer; dimerization is required for RNA-binding. Interacts with the mature core protein. Interacts (via N-terminus) with non-structural protein 4A. Interacts with non-structural protein 4B. Interacts (via region D2) with RNA-directed RNA polymerase. Part of the viral assembly initiation complex composed of NS2, E1, E2, NS3, NS4A, NS5A and the mature core protein. Part of the replication complex composed of NS2, NS3, NS4A, NS4B, NS5A and the RNA-directed RNA polymerase embedded in an ER-derived membranous web. Interacts with host GRB2. Interacts with host BIN1. Interacts with host PIK3R1. Interacts with host SRCAP. Interacts with host FKBP8. Interacts (via C-terminus) with host VAPB (via MSP domain). Interacts with host EIF2AK2/PKR; this interaction leads to disruption of EIF2AK2 dimerization by NS5A and probably allows the virus to evade the innate immune response. Interacts (via N-terminus) with host PACSIN2 (via N-terminus); this interaction attenuates protein kinase C alpha-mediated phosphorylation of PACSIN2 by disrupting the interaction between PACSIN2 and PRKCA. Interacts (via N-terminus) with host SRC kinase (via SH2 domain). Interacts with most Src-family kinases. Interacts with host IFI27 and SKP2; promotes the ubiquitin-mediated proteasomal degradation of NS5A. Interacts with host GPS2. Interacts with host TNFRSF21; this interaction allows the modulation by the virus of JNK, p38 MAPK, STAT3, and Akt signaling pathways in a DR6-dependent manner. Interacts (via N-terminus) with host CIDEB (via N-terminus); this interaction seems to regulate the association of HCV particles with APOE. Interacts with host CHKA/Choline Kinase-alpha; CHKA bridges host PI4KA and NS5A and potentiates NS5A-stimulated PI4KA activity, which then facilitates the targeting of the ternary complex to the ER for viral replication. Interacts with host SPSB2 (via C-terminus); this interaction targets NS5A for ubiquitination and degradation. Interacts with host RAB18; this interaction may promote the association of NS5A and other replicase components with lipid droplets. Interacts (via region D2) with host PPIA/CYPA; the interaction stimulates RNA-binding ability of NS5A and is dependent on the peptidyl-prolyl cis-trans isomerase activity of PPIA/CYPA. Interacts with host TRIM14; this interaction induces the degradation of NS5A. In terms of assembly, homooligomer. Interacts with non-structural protein 5A. Interacts with host VAPB. Interacts with host PRK2/PKN2. Interacts with host HNRNPA1 and SEPT6; these interactions facilitate viral replication. Part of the replication complex composed of NS2, NS3, NS4A, NS4B, NS5A and the RNA-directed RNA polymerase. Zn(2+) is required as a cofactor. It depends on Mg(2+) as a cofactor. Post-translationally, specific enzymatic cleavages in vivo yield mature proteins. The structural proteins, core, E1, E2 and p7 are produced by proteolytic processing by host signal peptidases. The core protein precursor is synthesized as a 23 kDa, which is retained in the ER membrane through the hydrophobic signal peptide. Cleavage by the signal peptidase releases the 21 kDa mature core protein. The cleavage of the core protein precursor occurs between aminoacids 176 and 188 but the exact cleavage site is not known. Some degraded forms of the core protein appear as well during the course of infection. The other proteins (p7, NS2, NS3, NS4A, NS4B, NS5A and NS5B) are cleaved by the viral proteases. Autoprocessing between NS2 and NS3 is mediated by the NS2 cysteine protease catalytic domain and regulated by the NS3 N-terminal domain. Phosphorylated by host PKC and PKA. In terms of processing, ubiquitinated; mediated by UBE3A and leading to core protein subsequent proteasomal degradation. Post-translationally, highly N-glycosylated. Palmitoylation is required for NS2/3 autoprocessing and E2 recruitment to membranes. In terms of processing, palmitoylated. This modification may play a role in its polymerization or in protein-protein interactions. Post-translationally, phosphorylated on serines in a basal form termed p56. p58 is a hyperphosphorylated form of p56. p56 and p58 coexist in the cell in roughly equivalent amounts. Hyperphosphorylation is dependent on the presence of NS4A. Host CSNK1A1/CKI-alpha or RPS6KB1 kinases may be responsible for NS5A phosphorylation. Tyrosine phosphorylation is essential for the interaction with host SRC. In terms of processing, ubiquitinated. Ubiquitination, most probably at Lys-2350, mediated by host IFI27 and SKP2 leads to proteasomal degradation, restricting viral infection. Ubiquitination by host TRIM22 leads to interruption of viral replication. Post-translationally, the N-terminus is phosphorylated by host PRK2/PKN2.

Its subcellular location is the host endoplasmic reticulum membrane. The protein resides in the host mitochondrion membrane. It localises to the virion. The protein localises to the host cytoplasm. It is found in the host nucleus. Its subcellular location is the host lipid droplet. The protein resides in the virion membrane. It localises to the host mitochondrion. The protein localises to the host cell membrane. It is found in the host perinuclear region. The catalysed reaction is Hydrolysis of four peptide bonds in the viral precursor polyprotein, commonly with Asp or Glu in the P6 position, Cys or Thr in P1 and Ser or Ala in P1'.. The enzyme catalyses a ribonucleoside 5'-triphosphate + H2O = a ribonucleoside 5'-diphosphate + phosphate + H(+). It carries out the reaction ATP + H2O = ADP + phosphate + H(+). It catalyses the reaction RNA(n) + a ribonucleoside 5'-triphosphate = RNA(n+1) + diphosphate. With respect to regulation, inhibited by the antiviral drug hexamethylene amiloride. Inhibition by amantadine appears to be genotype-dependent. Also inhibited by long-alkyl-chain iminosugar derivatives. Activity is up-regulated by PRK2/PKN2-mediated phosphorylation. Packages viral RNA to form a viral nucleocapsid, and promotes virion budding. Participates in the viral particle production as a result of its interaction with the non-structural protein 5A. Binds RNA and may function as a RNA chaperone to induce the RNA structural rearrangements taking place during virus replication. Modulates viral translation initiation by interacting with viral IRES and 40S ribosomal subunit. Affects various cell signaling pathways, host immunity and lipid metabolism. Prevents the establishment of cellular antiviral state by blocking the interferon-alpha/beta (IFN-alpha/beta) and IFN-gamma signaling pathways and by blocking the formation of phosphorylated STAT1 and promoting ubiquitin-mediated proteasome-dependent degradation of STAT1. Activates STAT3 leading to cellular transformation. Regulates the activity of cellular genes, including c-myc and c-fos. May repress the promoter of p53, and sequester CREB3 and SP110 isoform 3/Sp110b in the cytoplasm. Represses cell cycle negative regulating factor CDKN1A, thereby interrupting an important check point of normal cell cycle regulation. Targets transcription factors involved in the regulation of inflammatory responses and in the immune response: suppresses TNF-induced NF-kappa-B activation, and activates AP-1. Binds to dendritic cells (DCs) via C1QR1, resulting in down-regulation of T-lymphocytes proliferation. Alters lipid metabolism by interacting with hepatocellular proteins involved in lipid accumulation and storage. Induces up-regulation of FAS promoter activity, and thereby contributes to the increased triglyceride accumulation in hepatocytes (steatosis). In terms of biological role, forms a heterodimer with envelope glycoprotein E2, which mediates virus attachment to the host cell, virion internalization through clathrin-dependent endocytosis and fusion with host membrane. Fusion with the host cell is most likely mediated by both E1 and E2, through conformational rearrangements of the heterodimer required for fusion rather than a classical class II fusion mechanism. E1/E2 heterodimer binds host apolipoproteins such as APOB and APOE thereby forming a lipo-viro-particle (LVP). APOE associated to the LVP allows the initial virus attachment to cell surface receptors such as the heparan sulfate proteoglycans (HSPGs), syndecan-1 (SDC1), syndecan-1 (SDC2), the low-density lipoprotein receptor (LDLR) and scavenger receptor class B type I (SCARB1). The cholesterol transfer activity of SCARB1 allows E2 exposure and binding of E2 to SCARB1 and the tetraspanin CD81. E1/E2 heterodimer binding on CD81 activates the epithelial growth factor receptor (EGFR) signaling pathway. Diffusion of the complex E1-E2-EGFR-SCARB1-CD81 to the cell lateral membrane allows further interaction with Claudin 1 (CLDN1) and occludin (OCLN) to finally trigger HCV entry. Functionally, forms a heterodimer with envelope glycoprotein E1, which mediates virus attachment to the host cell, virion internalization through clathrin-dependent endocytosis and fusion with host membrane. Fusion with the host cell is most likely mediated by both E1 and E2, through conformational rearrangements of the heterodimer required for fusion rather than a classical class II fusion mechanism. The interaction between envelope glycoprotein E2 and host apolipoprotein E/APOE allows the proper assembly, maturation and infectivity of the viral particles. This interaction is probably promoted via the up-regulation of cellular autophagy by the virus. E1/E2 heterodimer binds host apolipoproteins such as APOB and APOE thereby forming a lipo-viro-particle (LVP). APOE associated to the LVP allows the initial virus attachment to cell surface receptors such as the heparan sulfate proteoglycans (HSPGs), syndecan-1 (SDC1), syndecan-1 (SDC2), the low-density lipoprotein receptor (LDLR) and scavenger receptor class B type I (SCARB1). The cholesterol transfer activity of SCARB1 allows E2 exposure and binding of E2 to SCARB1 and the tetraspanin CD81. E1/E2 heterodimer binding on CD81 activates the epithelial growth factor receptor (EGFR) signaling pathway. Diffusion of the complex E1-E2-EGFR-SCARB1-CD81 to the cell lateral membrane allows further interaction with Claudin 1 (CLDN1) and occludin (OCLN) to finally trigger HCV entry. Inhibits host EIF2AK2/PKR activation, preventing the establishment of an antiviral state. Viral ligand for CD209/DC-SIGN and CLEC4M/DC-SIGNR, which are respectively found on dendritic cells (DCs), and on liver sinusoidal endothelial cells and macrophage-like cells of lymph node sinuses. These interactions allow the capture of circulating HCV particles by these cells and subsequent facilitated transmission to permissive cells such as hepatocytes and lymphocyte subpopulations. The interaction between E2 and host amino acid transporter complex formed by SLC3A2 and SLC7A5/LAT1 may facilitate viral entry into host cell. Its function is as follows. Ion channel protein that acts as a viroporin and plays an essential role in the assembly, envelopment and secretion of viral particles. Regulates the host cell secretory pathway, which induces the intracellular retention of viral glycoproteins and favors assembly of viral particles. Creates a pore in acidic organelles and releases Ca(2+) and H(+) in the cytoplasm of infected cells, leading to a productive viral infection. High levels of cytoplasmic Ca(2+) may trigger membrane trafficking and transport of viral ER-associated proteins to viroplasms, sites of viral genome replication. This ionic imbalance induces the assembly of the inflammasome complex, which triggers the maturation of pro-IL-1beta into IL-1beta through the action of caspase-1. Targets also host mitochondria and induces mitochondrial depolarization. In addition of its role as a viroporin, acts as a lipid raft adhesion factor. Cysteine protease required for the proteolytic auto-cleavage between the non-structural proteins NS2 and NS3. The N-terminus of NS3 is required for the function of NS2 protease (active region NS2-3). Promotes the initiation of viral particle assembly by mediating the interaction between structural and non-structural proteins. In terms of biological role, displays three enzymatic activities: serine protease with a chymotrypsin-like fold, NTPase and RNA helicase. NS3 serine protease, in association with NS4A, is responsible for the cleavages of NS3-NS4A, NS4A-NS4B, NS4B-NS5A and NS5A-NS5B. The NS3/NS4A complex prevents phosphorylation of host IRF3, thus preventing the establishment of dsRNA induced antiviral state. The NS3/NS4A complex induces host amino acid transporter component SLC3A2, thus contributing to HCV propagation. NS3 RNA helicase binds to RNA and unwinds both dsDNA and dsRNA in the 3' to 5' direction, and likely resolves RNA complicated stable secondary structures in the template strand. Binds a single ATP and catalyzes the unzipping of a single base pair of dsRNA. Inhibits host antiviral proteins TBK1 and IRF3 thereby preventing the establishment of an antiviral state. Cleaves host MAVS/CARDIF thereby preventing the establishment of an antiviral state. Cleaves host TICAM1/TRIF, thereby disrupting TLR3 signaling and preventing the establishment of an antiviral state. Functionally, peptide cofactor which forms a non-covalent complex with the N-terminal of NS3 serine protease. The NS3/NS4A complex prevents phosphorylation of host IRF3, thus preventing the establishment of dsRNA induced antiviral state. The NS3/NS4A complex induces host amino acid transporter component SLC3A2, thus contributing to HCV propagation. Its function is as follows. Induces a specific membrane alteration that serves as a scaffold for the virus replication complex. This membrane alteration gives rise to the so-called ER-derived membranous web that contains the replication complex. NS4B self-interaction contributes to its function in membranous web formation. Promotes host TRIF protein degradation in a CASP8-dependent manner thereby inhibiting host TLR3-mediated interferon signaling. Disrupts the interaction between STING and TBK1 contributing to the inhibition of interferon signaling. Phosphorylated protein that is indispensable for viral replication and assembly. Both hypo- and hyperphosphorylated states are required for the viral life cycle. The hyperphosphorylated form of NS5A is an inhibitor of viral replication. Involved in RNA-binding and especially in binding to the viral genome. Zinc is essential for RNA-binding. Participates in the viral particle production as a result of its interaction with the mature viral core protein. Its interaction with host VAPB may target the viral replication complex to vesicles. Down-regulates viral IRES translation initiation. Mediates interferon resistance, presumably by interacting with and inhibiting host EIF2AK2/PKR. Prevents BIN1-induced apoptosis. Acts as a transcriptional activator of some host genes important for viral replication when localized in the nucleus. Via the interaction with host PACSIN2, modulates lipid droplet formation in order to promote virion assembly. Modulates TNFRSF21/DR6 signaling pathway for viral propagation. In terms of biological role, RNA-dependent RNA polymerase that performs primer-template recognition and RNA synthesis during viral replication. Initiates RNA transcription/replication at a flavin adenine dinucleotide (FAD), resulting in a 5'- FAD cap on viral RNAs. In this way, recognition of viral 5' RNA by host pattern recognition receptors can be bypassed, thereby evading activation of antiviral pathways. The protein is Genome polyprotein of Homo sapiens (Human).